Consider the following 160-residue polypeptide: Nucleotide-binding protein VV1636 (160 aa).

It belongs to the YajQ family.

Its function is as follows. Nucleotide-binding protein. This chain is Nucleotide-binding protein VV1636, found in Vibrio vulnificus (strain YJ016).